We begin with the raw amino-acid sequence, 246 residues long: Acetoacetate decarboxylase (246 aa).

Lysine 116 acts as the Schiff-base intermediate with acetoacetate in catalysis.

It belongs to the ADC family.

It catalyses the reaction acetoacetate + H(+) = acetone + CO2. Functionally, catalyzes the conversion of acetoacetate to acetone and carbon dioxide. The protein is Acetoacetate decarboxylase of Burkholderia lata (strain ATCC 17760 / DSM 23089 / LMG 22485 / NCIMB 9086 / R18194 / 383).